The following is a 157-amino-acid chain: Endoribonuclease YbeY (157 aa).

Zn(2+) is bound by residues H122, H126, and H132.

Belongs to the endoribonuclease YbeY family. Zn(2+) serves as cofactor.

The protein resides in the cytoplasm. Its function is as follows. Single strand-specific metallo-endoribonuclease involved in late-stage 70S ribosome quality control and in maturation of the 3' terminus of the 16S rRNA. The protein is Endoribonuclease YbeY of Lysinibacillus sphaericus (strain C3-41).